Consider the following 350-residue polypeptide: IPYWTYNHGDEPLVAISLLDTSNIANQLDSTPRVFYLGGNPETEFPETQEEQQGRHRQKHSYPVGRRSGHHQQEEESEEQNEGNSVLSGVSSEFLAQTFNTEEDTAKRLRSPRDERSQIVRVEGGLRIINPKGKEEEEEKEQSHSHSHREEEEEEEEDEEKQRSEERKNGLEETICSAKIRENIADAAGADLYNPRAGRIRTANSLTLPVLRYLRLSAEYVRLYRNGIYAPHWNINANSLLYVIRGEGRVRIVNFQGDAVFDNKVRKGQLVVVPQNFVVAEQAGEEEGLEYVVFKTNDRAAVSHVQQVLRATPAEVLANAFGLRQRQVTELKLSGNRGPLVHPQSQSQSH.

Disordered stretches follow at residues 37-86 (LGGN…GNSV) and 102-170 (EEDT…RKNG). Composition is skewed to basic and acidic residues over residues 104–118 (DTAK…ERSQ), 141–150 (EQSHSHSHRE), and 160–170 (EKQRSEERKNG). The 148-residue stretch at 182-329 (ENIADAAGAD…AFGLRQRQVT (148 aa)) folds into the Cupin type-1 domain.

Belongs to the 11S seed storage protein (globulins) family. As to quaternary structure, hexamer; each subunit is composed of an acidic and a basic chain derived from a single precursor and linked by a disulfide bond.

Functionally, this protein found in the seeds of many leguminous and non-leguminous plants is the source of sulfur-containing amino acids in seed meals. This is Legumin K (LEGK) from Pisum sativum (Garden pea).